A 1242-amino-acid polypeptide reads, in one-letter code: ATP-dependent helicase/nuclease subunit A (1242 aa).

In terms of domain architecture, UvrD-like helicase ATP-binding spans 12-487 (SRWTDEQWKA…IDLASNFRSR (476 aa)). 33–40 (AAAGSGKT) contributes to the ATP binding site. The region spanning 514-808 (AAQLKYGADY…RVMTIHSSKG (295 aa)) is the UvrD-like helicase C-terminal domain.

Belongs to the helicase family. AddA subfamily. Heterodimer of AddA and AddB/RexB. Mg(2+) serves as cofactor.

It carries out the reaction Couples ATP hydrolysis with the unwinding of duplex DNA by translocating in the 3'-5' direction.. The catalysed reaction is ATP + H2O = ADP + phosphate + H(+). In terms of biological role, the heterodimer acts as both an ATP-dependent DNA helicase and an ATP-dependent, dual-direction single-stranded exonuclease. Recognizes the chi site generating a DNA molecule suitable for the initiation of homologous recombination. The AddA nuclease domain is required for chi fragment generation; this subunit has the helicase and 3' -&gt; 5' nuclease activities. This is ATP-dependent helicase/nuclease subunit A from Geobacillus thermodenitrificans (strain NG80-2).